The following is a 654-amino-acid chain: Pyoverdine export ATP-binding/permease protein PvdT (654 aa).

Residues 6 to 245 (IELCDIRKAY…QPEQLQANDL (240 aa)) form the ABC transporter domain. Position 43-50 (43-50 (GASGSGKS)) interacts with ATP. The next 4 membrane-spanning stretches (helical) occupy residues 282 to 302 (ALTL…LAVG), 529 to 549 (LSLM…IGVM), 596 to 616 (IVIA…VAFA), and 617 to 637 (LPAI…FGFM).

Belongs to the ABC transporter superfamily. Macrolide exporter (TC 3.A.1.122) family. In terms of assembly, part of the tripartite efflux system PvdRT-OpmQ, which is composed of an inner membrane component with both ATPase and permease domains, PvdT, a periplasmic membrane fusion protein, PvdR, and an outer membrane component, OpmQ.

The protein localises to the cell inner membrane. Part of the tripartite efflux system PvdRT-OpmQ required for the secretion into the extracellular milieu of the siderophore pyoverdine (PVD), which is involved in iron acquisition. This subunit binds PVD and drives its secretion by hydrolyzing ATP. The system is responsible for export of newly synthesized PVD after the final steps of biosynthesis have taken place in the periplasm. It is also responsible for recycling of PVD after internalization of ferri-PVD into the periplasm by the outer-membrane receptor FpvA and release of iron from PVD, thus making PVD available for new cycles of iron uptake. This chain is Pyoverdine export ATP-binding/permease protein PvdT, found in Pseudomonas entomophila (strain L48).